We begin with the raw amino-acid sequence, 246 residues long: DNA polymerase sliding clamp 3 (246 aa).

This sequence belongs to the PCNA family. The subunits circularize to form a toroid; DNA passes through its center. Replication factor C (RFC) is required to load the toroid on the DNA. Forms dimeric complexes with PCNA1 and PCNA2, and trimeric complexes with PCNA123 and PCNA323; does not form homotrimers. Crystal structures show a heterotetramer of 2 PCNA2 and 2 PCNA3, which would be large enough to clamp a Holliday junction.

In terms of biological role, sliding clamp subunit that acts as a moving platform for DNA processing. Responsible for tethering the catalytic subunit of DNA polymerase and other proteins to DNA during high-speed replication. Both trimeric complexes inhibit DNA ligase and both 3'-5' and 5'-3' activity of Hel308 (Hjm) helicase, but stimulate Hjc, the Holliday junction cleavage enzyme. This Sulfurisphaera tokodaii (strain DSM 16993 / JCM 10545 / NBRC 100140 / 7) (Sulfolobus tokodaii) protein is DNA polymerase sliding clamp 3.